Consider the following 232-residue polypeptide: Phosphate import ATP-binding protein PstB (232 aa).

The ABC transporter domain occupies 1–227 (MFNINMEIKE…PKDRRTENYI (227 aa)). 18–25 (GPSGCGKT) is a binding site for ATP.

Belongs to the ABC transporter superfamily. Phosphate importer (TC 3.A.1.7) family. As to quaternary structure, the complex is composed of two ATP-binding proteins (PstB), two transmembrane proteins (PstC and PstA) and a solute-binding protein (PstS).

The protein resides in the cell membrane. It catalyses the reaction phosphate(out) + ATP + H2O = ADP + 2 phosphate(in) + H(+). In terms of biological role, part of the ABC transporter complex PstSACB involved in phosphate import. Responsible for energy coupling to the transport system. This Mycoplasma mycoides subsp. mycoides SC (strain CCUG 32753 / NCTC 10114 / PG1) protein is Phosphate import ATP-binding protein PstB.